The primary structure comprises 271 residues: Formamidopyrimidine-DNA glycosylase (271 aa).

The Schiff-base intermediate with DNA role is filled by Pro-2. The active-site Proton donor is the Glu-3. Lys-57 acts as the Proton donor; for beta-elimination activity in catalysis. His-90, Arg-109, and Lys-151 together coordinate DNA. The FPG-type zinc finger occupies 236–270; the sequence is HVYGRGGETCTQCGHLLSEIKLGQRATVFCSLCQK. Residue Arg-260 is the Proton donor; for delta-elimination activity of the active site.

The protein belongs to the FPG family. Monomer. The cofactor is Zn(2+).

The catalysed reaction is Hydrolysis of DNA containing ring-opened 7-methylguanine residues, releasing 2,6-diamino-4-hydroxy-5-(N-methyl)formamidopyrimidine.. The enzyme catalyses 2'-deoxyribonucleotide-(2'-deoxyribose 5'-phosphate)-2'-deoxyribonucleotide-DNA = a 3'-end 2'-deoxyribonucleotide-(2,3-dehydro-2,3-deoxyribose 5'-phosphate)-DNA + a 5'-end 5'-phospho-2'-deoxyribonucleoside-DNA + H(+). Functionally, involved in base excision repair of DNA damaged by oxidation or by mutagenic agents. Acts as a DNA glycosylase that recognizes and removes damaged bases. Has a preference for oxidized purines, such as 7,8-dihydro-8-oxoguanine (8-oxoG). Has AP (apurinic/apyrimidinic) lyase activity and introduces nicks in the DNA strand. Cleaves the DNA backbone by beta-delta elimination to generate a single-strand break at the site of the removed base with both 3'- and 5'-phosphates. In Shewanella halifaxensis (strain HAW-EB4), this protein is Formamidopyrimidine-DNA glycosylase.